A 211-amino-acid chain; its full sequence is Transcriptional regulatory protein RcsA (211 aa).

The region spanning 135–200 (LDVHPLTLSQ…VIYHVVRLTD (66 aa)) is the HTH luxR-type domain. Residues 159–178 (TIQISDKMQIKAKTVSSHKG) constitute a DNA-binding region (H-T-H motif).

This sequence belongs to the RcsA family.

Functionally, component of the Rcs signaling system, which controls transcription of numerous genes. Binds to DNA to regulate expression of genes. This Pantoea stewartii subsp. stewartii (Erwinia stewartii) protein is Transcriptional regulatory protein RcsA.